The primary structure comprises 28 residues: Ranatuerin-2LTa (28 aa).

Residues cysteine 23 and cysteine 28 are joined by a disulfide bond.

In terms of tissue distribution, expressed by the skin glands.

The protein resides in the secreted. Functionally, has antibacterial activity. The sequence is that of Ranatuerin-2LTa from Rana latastei (Italian agile frog).